The chain runs to 175 residues: EKC/KEOPS complex subunit TPRKB (175 aa).

Belongs to the CGI121/TPRKB family. In terms of assembly, component of the EKC/KEOPS complex.

It localises to the cytoplasm. The protein localises to the cytosol. The protein resides in the nucleus. Component of the EKC/KEOPS complex that is required for the formation of a threonylcarbamoyl group on adenosine at position 37 (t(6)A37) in tRNAs that read codons beginning with adenine. The complex is probably involved in the transfer of the threonylcarbamoyl moiety of threonylcarbamoyl-AMP (TC-AMP) to the N6 group of A37. Tprkb acts as an allosteric effector that regulates the t(6)A activity of the complex. This Danio rerio (Zebrafish) protein is EKC/KEOPS complex subunit TPRKB.